We begin with the raw amino-acid sequence, 280 residues long: Putative pyruvate, phosphate dikinase regulatory protein (280 aa).

Residue 154–161 (GVSRTSKT) participates in ADP binding.

Belongs to the pyruvate, phosphate/water dikinase regulatory protein family. PDRP subfamily.

The catalysed reaction is N(tele)-phospho-L-histidyl/L-threonyl-[pyruvate, phosphate dikinase] + ADP = N(tele)-phospho-L-histidyl/O-phospho-L-threonyl-[pyruvate, phosphate dikinase] + AMP + H(+). It catalyses the reaction N(tele)-phospho-L-histidyl/O-phospho-L-threonyl-[pyruvate, phosphate dikinase] + phosphate + H(+) = N(tele)-phospho-L-histidyl/L-threonyl-[pyruvate, phosphate dikinase] + diphosphate. Its function is as follows. Bifunctional serine/threonine kinase and phosphorylase involved in the regulation of the pyruvate, phosphate dikinase (PPDK) by catalyzing its phosphorylation/dephosphorylation. This Nitrobacter hamburgensis (strain DSM 10229 / NCIMB 13809 / X14) protein is Putative pyruvate, phosphate dikinase regulatory protein.